A 155-amino-acid chain; its full sequence is UPF0260 protein NGR_c07710 (155 aa).

Belongs to the UPF0260 family.

The chain is UPF0260 protein NGR_c07710 from Sinorhizobium fredii (strain NBRC 101917 / NGR234).